The primary structure comprises 158 residues: Ribosome maturation factor RimP (158 aa).

The protein belongs to the RimP family.

It is found in the cytoplasm. Required for maturation of 30S ribosomal subunits. The sequence is that of Ribosome maturation factor RimP from Pseudomonas savastanoi pv. phaseolicola (strain 1448A / Race 6) (Pseudomonas syringae pv. phaseolicola (strain 1448A / Race 6)).